A 782-amino-acid chain; its full sequence is Nezukol synthase KSL3 (782 aa).

Mg(2+) is bound by residues Asp-529, Asp-533, Asn-677, and Glu-685. The DDXXD motif signature appears at 529 to 533 (DDVFD).

It belongs to the terpene synthase family. The cofactor is Mg(2+). Highly expressed in leaves, and, at low levels, in stems, but barely in roots and flowers.

The enzyme catalyses (+)-copalyl diphosphate = miltiradiene + diphosphate. The catalysed reaction is (+)-copalyl diphosphate + H2O = nezukol + diphosphate. The protein operates within secondary metabolite biosynthesis; terpenoid biosynthesis. Its function is as follows. Involved in the biosynthesis of ent-kaurene diterpenoids natural products such as oridonin, miltiradiene, eriocalyxin B and nezukol, known to exhibit antitumor, anti-inflammatory and antibacterial activities. Catalyzes the conversion of (+)-copalyl diphosphate ((+)-CPP) to nezukol and miltiradiene. The reaction mechanism proceeds via the ionization of the diphosphate group of (+)-CPP, followed by formation of an intermediary pimar-15-en-8-yl(+) carbocation and neutralization of the carbocation by water capture at C-8 to yield nezukol. Can interact with ent-copalyl diphosphate (ent-CPP) but seems unable to use it as substrate. The sequence is that of Nezukol synthase KSL3 from Isodon rubescens (Rabdosia rubescens).